A 61-amino-acid chain; its full sequence is Probable tautomerase BA_5626/GBAA_5626/BAS5226 (61 aa).

P2 (proton acceptor; via imino nitrogen) is an active-site residue.

It belongs to the 4-oxalocrotonate tautomerase family.

This chain is Probable tautomerase BA_5626/GBAA_5626/BAS5226, found in Bacillus anthracis.